The chain runs to 81 residues: Cysteine-rich and transmembrane domain-containing protein PCC1 (81 aa).

A compositionally biased stretch (polar residues) spans 1 to 22 (MNQSAQNYFSVQKPSETSSGPY). Residues 1 to 34 (MNQSAQNYFSVQKPSETSSGPYTSPPPIGYPTRD) are disordered. A helical membrane pass occupies residues 56-74 (AIMSCFSTCMECIFCCGVC).

It belongs to the CYSTM1 family. As to expression, expressed at very low levels in seedlings and petioles, and at higher levels in leaves. Also present in phloem sap.

It localises to the cell membrane. In terms of biological role, modulates resistance against pathogens including oomycetes (e.g. Hyaloperonospora parasitica and Phytophthora brassicae) and fungi (e.g. Phytophthora brassicae). Controls the abscisic acid-mediated (ABA) signaling pathways. Regulator of the flowering time in response to stress (e.g. UV-C). Regulates polar lipid content; promotes phosphatidylinositol (PI) and 18:0 but prevents 18:2 and 18:3 polar lipids accumulation. This chain is Cysteine-rich and transmembrane domain-containing protein PCC1 (PCC1), found in Arabidopsis thaliana (Mouse-ear cress).